Reading from the N-terminus, the 168-residue chain is Phosphopantetheine adenylyltransferase (168 aa).

Thr-13 is a substrate binding site. ATP contacts are provided by residues 13–14 (TF) and His-21. Substrate contacts are provided by Lys-45, Leu-78, and Arg-92. ATP is bound by residues 93-95 (GLR), Glu-103, and 128-134 (TQFISSG).

It belongs to the bacterial CoaD family. As to quaternary structure, homohexamer. Mg(2+) is required as a cofactor.

It localises to the cytoplasm. The enzyme catalyses (R)-4'-phosphopantetheine + ATP + H(+) = 3'-dephospho-CoA + diphosphate. The protein operates within cofactor biosynthesis; coenzyme A biosynthesis; CoA from (R)-pantothenate: step 4/5. Reversibly transfers an adenylyl group from ATP to 4'-phosphopantetheine, yielding dephospho-CoA (dPCoA) and pyrophosphate. This Wolbachia sp. subsp. Drosophila simulans (strain wRi) protein is Phosphopantetheine adenylyltransferase.